The sequence spans 335 residues: Phosphate acyltransferase (335 aa).

It belongs to the PlsX family. In terms of assembly, homodimer. Probably interacts with PlsY.

The protein localises to the cytoplasm. It catalyses the reaction a fatty acyl-[ACP] + phosphate = an acyl phosphate + holo-[ACP]. Its pathway is lipid metabolism; phospholipid metabolism. Functionally, catalyzes the reversible formation of acyl-phosphate (acyl-PO(4)) from acyl-[acyl-carrier-protein] (acyl-ACP). This enzyme utilizes acyl-ACP as fatty acyl donor, but not acyl-CoA. The chain is Phosphate acyltransferase from Streptococcus pyogenes serotype M28 (strain MGAS6180).